The following is a 144-amino-acid chain: Large ribosomal subunit protein uL16 (144 aa).

It belongs to the universal ribosomal protein uL16 family. As to quaternary structure, part of the 50S ribosomal subunit.

In terms of biological role, binds 23S rRNA and is also seen to make contacts with the A and possibly P site tRNAs. The polypeptide is Large ribosomal subunit protein uL16 (Bacillus mycoides (strain KBAB4) (Bacillus weihenstephanensis)).